We begin with the raw amino-acid sequence, 512 residues long: Keratin, type I cytoskeletal 24 (512 aa).

Residues 1–21 (MFCSAQKGSCSSRVSSSGAVG) are disordered. Residues 1–140 (MFCSAQKGSC…GYDGGLLSGS (140 aa)) are head. Residues 8-21 (GSCSSRVSSSGAVG) show a composition bias toward low complexity. Residues 141-176 (EKQTMQDLNDRLANYLDKVRALEEANTDLECKIKDW) are coil 1A. Positions 141 to 455 (EKQTMQDLND…RLLNGDGGGC (315 aa)) constitute an IF rod domain. The linker 1 stretch occupies residues 177–197 (YGKHGSVKGGSGRDYSQYYSI). The segment at 198–289 (IEDLKKQILS…KNHEEEMKCM (92 aa)) is coil 1B. Positions 290–312 (QGSSGGDVTVEMNAAPGVDLTKL) are linker 12. The segment at 313–451 (LNDMRAQYEA…ETYRRLLNGD (139 aa)) is coil 2. Residues 452–512 (GGGCDYRNLV…VSNISEVKIK (61 aa)) are tail.

Belongs to the intermediate filament family. As to quaternary structure, heterotetramer of two type I and two type II keratins.

In Mus musculus (Mouse), this protein is Keratin, type I cytoskeletal 24 (Krt24).